The following is a 228-amino-acid chain: PKHD-type hydroxylase XCV3086 (228 aa).

The 103-residue stretch at 78–180 folds into the Fe2OG dioxygenase domain; the sequence is RIYPPLFNRY…RVACFFWTQS (103 aa). The Fe cation site is built by His96, Asp98, and His161. Position 171 (Arg171) interacts with 2-oxoglutarate.

Fe(2+) is required as a cofactor. L-ascorbate serves as cofactor.

This is PKHD-type hydroxylase XCV3086 from Xanthomonas euvesicatoria pv. vesicatoria (strain 85-10) (Xanthomonas campestris pv. vesicatoria).